The sequence spans 421 residues: Phosphatidylinositol 5-phosphate 4-kinase type-2 gamma (421 aa).

Position 2 is an N-acetylalanine (Ala2). A Phosphoserine modification is found at Ser26. One can recognise a PIPK domain in the interval 43 to 420 (AADPLVGVFL…RFLDFITNIF (378 aa)). The segment at 69–75 (VMLLPDD) is required for interaction with PIP5K1A. Ser349 bears the Phosphoserine mark.

In terms of assembly, interacts with PIP5K1A; the interaction inhibits PIP5K1A kinase activity. Post-translationally, phosphorylated, phosphorylation is induced by EGF.

The protein localises to the endoplasmic reticulum. It is found in the cytoplasm. The catalysed reaction is a 1,2-diacyl-sn-glycero-3-phospho-(1D-myo-inositol-5-phosphate) + ATP = a 1,2-diacyl-sn-glycero-3-phospho-(1D-myo-inositol-4,5-bisphosphate) + ADP + H(+). It catalyses the reaction 1,2-dihexadecanoyl-sn-glycero-3-phospho-(1D-myo-inositol-5-phosphate) + ATP = 1,2-dihexadecanoyl-sn-glycero-3-phospho-(1D-myo-inositol-4,5-bisphosphate) + ADP + H(+). It carries out the reaction 1,2-dihexadecanoyl-sn-glycero-3-phospho-(1D-myo-inositol-5-phosphate) + GTP = 1,2-dihexadecanoyl-sn-glycero-3-phospho-(1D-myo-inositol-4,5-bisphosphate) + GDP + H(+). Phosphatidylinositol 5-phosphate 4-kinase with low enzymatic activity. May be a GTP sensor, has higher GTP-dependent kinase activity than ATP-dependent kinase activity. PIP4Ks negatively regulate insulin signaling through a catalytic-independent mechanism. They interact with PIP5Ks and suppress PIP5K-mediated PtdIns(4,5)P2 synthesis and insulin-dependent conversion to PtdIns(3,4,5)P3. The sequence is that of Phosphatidylinositol 5-phosphate 4-kinase type-2 gamma from Homo sapiens (Human).